Reading from the N-terminus, the 137-residue chain is Small ribosomal subunit protein uS9 (137 aa).

Belongs to the universal ribosomal protein uS9 family.

This Saccharolobus solfataricus (strain ATCC 35092 / DSM 1617 / JCM 11322 / P2) (Sulfolobus solfataricus) protein is Small ribosomal subunit protein uS9 (rps9).